The sequence spans 127 residues: Protein ApaG (127 aa).

The 125-residue stretch at 3-127 folds into the ApaG domain; the sequence is KTSIPDFQIT…FYLIAPLALH (125 aa).

In Bdellovibrio bacteriovorus (strain ATCC 15356 / DSM 50701 / NCIMB 9529 / HD100), this protein is Protein ApaG.